The chain runs to 418 residues: Gamma-glutamyl phosphate reductase (418 aa).

It belongs to the gamma-glutamyl phosphate reductase family.

It localises to the cytoplasm. The catalysed reaction is L-glutamate 5-semialdehyde + phosphate + NADP(+) = L-glutamyl 5-phosphate + NADPH + H(+). It participates in amino-acid biosynthesis; L-proline biosynthesis; L-glutamate 5-semialdehyde from L-glutamate: step 2/2. Its function is as follows. Catalyzes the NADPH-dependent reduction of L-glutamate 5-phosphate into L-glutamate 5-semialdehyde and phosphate. The product spontaneously undergoes cyclization to form 1-pyrroline-5-carboxylate. The polypeptide is Gamma-glutamyl phosphate reductase (Lacticaseibacillus paracasei (strain ATCC 334 / BCRC 17002 / CCUG 31169 / CIP 107868 / KCTC 3260 / NRRL B-441) (Lactobacillus paracasei)).